Here is a 397-residue protein sequence, read N- to C-terminus: Acetate kinase 2 (397 aa).

Asn10 is a binding site for Mg(2+). Lys17 serves as a coordination point for ATP. Residue Arg90 coordinates substrate. Asp147 serves as the catalytic Proton donor/acceptor. Residues 207–211 (HLGNG), 281–283 (DAR), and 329–333 (GIGEN) each bind ATP. Glu385 provides a ligand contact to Mg(2+).

The protein belongs to the acetokinase family. In terms of assembly, homodimer. Mg(2+) serves as cofactor. It depends on Mn(2+) as a cofactor.

It is found in the cytoplasm. The catalysed reaction is acetate + ATP = acetyl phosphate + ADP. It functions in the pathway metabolic intermediate biosynthesis; acetyl-CoA biosynthesis; acetyl-CoA from acetate: step 1/2. Its function is as follows. Catalyzes the formation of acetyl phosphate from acetate and ATP. Can also catalyze the reverse reaction. This chain is Acetate kinase 2, found in Vibrio vulnificus (strain CMCP6).